We begin with the raw amino-acid sequence, 158 residues long: Cytochrome c-type biogenesis protein CcmE (158 aa).

Topologically, residues 1–23 (MNSQSFKNFPSLKFISKKRRKER) are cytoplasmic. A helical; Signal-anchor for type II membrane protein membrane pass occupies residues 24–44 (LLMVLLCLFIMAITTGLIVYA). The Periplasmic portion of the chain corresponds to 45–158 (MRNTANFFRT…DRLKKHHDIK (114 aa)). Residues histidine 138 and tyrosine 142 each coordinate heme.

This sequence belongs to the CcmE/CycJ family.

The protein localises to the cell inner membrane. In terms of biological role, heme chaperone required for the biogenesis of c-type cytochromes. Transiently binds heme delivered by CcmC and transfers the heme to apo-cytochromes in a process facilitated by CcmF and CcmH. This chain is Cytochrome c-type biogenesis protein CcmE, found in Bartonella bacilliformis (strain ATCC 35685 / KC583 / Herrer 020/F12,63).